Reading from the N-terminus, the 487-residue chain is Solute carrier family 22 member 15-like (487 aa).

Residues 22–42 (AFLTLLQVYVACQSMLIVLVG) form a helical membrane-spanning segment. N70 is a glycosylation site (N-linked (GlcNAc...) asparagine). 11 helical membrane-spanning segments follow: residues 90–110 (LASS…GPLS), 117–137 (PVYL…ALAP), 141–161 (VFAV…LVSF), 178–198 (SLTN…GFYI), 203–223 (TLAF…FLLP), 286–306 (ILLM…TLNA), 315–335 (LNVA…LYFI), 345–365 (ATAG…FLPE), 374–394 (TVLA…VYIY), 406–426 (AGLG…PFIP), and 435–455 (MPFV…LLLP).

This sequence belongs to the major facilitator (TC 2.A.1) superfamily. Organic cation transporter (TC 2.A.1.19) family.

The protein localises to the membrane. Its function is as follows. Probably transports organic cations. This chain is Solute carrier family 22 member 15-like (slc22a15b), found in Xenopus tropicalis (Western clawed frog).